Consider the following 443-residue polypeptide: Exodeoxyribonuclease 7 large subunit (443 aa).

Belongs to the XseA family. Heterooligomer composed of large and small subunits.

It localises to the cytoplasm. It catalyses the reaction Exonucleolytic cleavage in either 5'- to 3'- or 3'- to 5'-direction to yield nucleoside 5'-phosphates.. Functionally, bidirectionally degrades single-stranded DNA into large acid-insoluble oligonucleotides, which are then degraded further into small acid-soluble oligonucleotides. This is Exodeoxyribonuclease 7 large subunit from Vibrio vulnificus (strain CMCP6).